Consider the following 583-residue polypeptide: L-galactono-1,4-lactone dehydrogenase 2, mitochondrial (583 aa).

Residues 1–36 constitute a mitochondrion transit peptide; that stretch reads MRRLLLAGILRRASSSPSSHHHLHLVRALSASSPLP. Residues 37 to 78 constitute a propeptide, removed in mature form; it reads ASDADLRKYAGYALLLLGCGAATYYSFPLPPDALHKKAVPFK. The chain crosses the membrane as a helical span at residues 45 to 61; it reads YAGYALLLLGCGAATYY. Residues 95 to 266 form the FAD-binding PCMH-type domain; it reads THEVHTRVLL…AEVTLQCVER (172 aa).

Requires FAD as cofactor.

The protein localises to the mitochondrion membrane. It catalyses the reaction L-galactono-1,4-lactone + 4 Fe(III)-[cytochrome c] = L-dehydroascorbate + 4 Fe(II)-[cytochrome c] + 5 H(+). It functions in the pathway cofactor biosynthesis; L-ascorbate biosynthesis. In terms of biological role, involved in the biosynthesis of ascorbic acid. This Oryza sativa subsp. japonica (Rice) protein is L-galactono-1,4-lactone dehydrogenase 2, mitochondrial (GLDH2).